Here is an 89-residue protein sequence, read N- to C-terminus: Small ribosomal subunit protein uS15 (89 aa).

The protein belongs to the universal ribosomal protein uS15 family. In terms of assembly, part of the 30S ribosomal subunit. Forms a bridge to the 50S subunit in the 70S ribosome, contacting the 23S rRNA.

Its function is as follows. One of the primary rRNA binding proteins, it binds directly to 16S rRNA where it helps nucleate assembly of the platform of the 30S subunit by binding and bridging several RNA helices of the 16S rRNA. Functionally, forms an intersubunit bridge (bridge B4) with the 23S rRNA of the 50S subunit in the ribosome. In Exiguobacterium sibiricum (strain DSM 17290 / CCUG 55495 / CIP 109462 / JCM 13490 / 255-15), this protein is Small ribosomal subunit protein uS15.